The sequence spans 133 residues: Acyl-CoA thioester hydrolase YciA (133 aa).

Residues 8 to 123 enclose the HotDog ACOT-type domain; sequence PQGELVLRTL…LFIYVAVDPD (116 aa).

It belongs to the acyl coenzyme A hydrolase family.

Functionally, catalyzes the hydrolysis of the thioester bond in palmitoyl-CoA and malonyl-CoA. The polypeptide is Acyl-CoA thioester hydrolase YciA (yciA) (Salmonella typhi).